Consider the following 115-residue polypeptide: Large ribosomal subunit protein bL20c (115 aa).

Belongs to the bacterial ribosomal protein bL20 family.

The protein resides in the plastid. The protein localises to the chloroplast. Binds directly to 23S ribosomal RNA and is necessary for the in vitro assembly process of the 50S ribosomal subunit. It is not involved in the protein synthesizing functions of that subunit. In Mesostigma viride (Green alga), this protein is Large ribosomal subunit protein bL20c (rpl20).